Here is a 209-residue protein sequence, read N- to C-terminus: Glutathione S-transferase 1-1 (209 aa).

The 81-residue stretch at methionine 1–aspartate 81 folds into the GST N-terminal domain. Residues histidine 51 to isoleucine 53 and glutamate 65 to arginine 67 contribute to the glutathione site. The region spanning cysteine 87 to glutamate 209 is the GST C-terminal domain.

This sequence belongs to the GST superfamily. Theta family. As to quaternary structure, homodimer.

The enzyme catalyses RX + glutathione = an S-substituted glutathione + a halide anion + H(+). Its function is as follows. Conjugation of reduced glutathione to a wide number of exogenous and endogenous hydrophobic electrophiles. This Drosophila yakuba (Fruit fly) protein is Glutathione S-transferase 1-1 (GstD1).